A 125-amino-acid chain; its full sequence is DNA-directed RNA polymerase II subunit RPB9 (125 aa).

Met1 is subject to N-acetylmethionine. Positions 17, 20, 39, 42, 86, 89, 114, and 119 each coordinate Zn(2+). The C4-type zinc-finger motif lies at 17–42 (CQECNNMLYPKEDKENRILLYACRNC). The TFIIS-type zinc finger occupies 82–124 (EDHPCQKCGHKEAVFFQSHSARAEDAMRLYYVCTAPHCGHRWT).

Belongs to the archaeal RpoM/eukaryotic RPA12/RPB9/RPC11 RNA polymerase family. In terms of assembly, component of the RNA polymerase II (Pol II) core complex consisting of 12 subunits: a ten-subunit catalytic core composed of POLR2A/RPB1, POLR2B/RPB2, POLR2C/RPB3, POLR2I/RPB9, POLR2J/RPB11, POLR2E/RPABC1, POLR2F/RPABC2, POLR2H/RPABC3, POLR2K/RPABC4 and POLR2L/RPABC5 and a mobile stalk composed of two subunits POLR2D/RPB4 and POLR2G/RPB7, protruding from the core and functioning primarily in transcription initiation. Part of Pol II(G) complex, in which Pol II core associates with an additional subunit POLR2M; unlike conventional Pol II, Pol II(G) functions as a transcriptional repressor. Part of TBP-based Pol II pre-initiation complex (PIC), in which Pol II core assembles with general transcription factors and other specific initiation factors including GTF2E1, GTF2E2, GTF2F1, GTF2F2, TCEA1, ERCC2, ERCC3, GTF2H2, GTF2H3, GTF2H4, GTF2H5, GTF2A1, GTF2A2, GTF2B and TBP; this large multi-subunit PIC complex mediates DNA unwinding and targets Pol II core to the transcription start site where the first phosphodiester bond forms.

Its subcellular location is the nucleus. The protein localises to the nucleolus. In terms of biological role, DNA-dependent RNA polymerase catalyzes the transcription of DNA into RNA using the four ribonucleoside triphosphates as substrates. Component of RNA polymerase II which synthesizes mRNA precursors and many functional non-coding RNAs. Pol II is the central component of the basal RNA polymerase II transcription machinery. It is composed of mobile elements that move relative to each other. POLR2I/RPB9 is part of the upper jaw surrounding the central large cleft and thought to grab the incoming DNA template. The protein is DNA-directed RNA polymerase II subunit RPB9 (POLR2I) of Bos taurus (Bovine).